The primary structure comprises 203 residues: Glycerol-3-phosphate acyltransferase (203 aa).

4 helical membrane-spanning segments follow: residues 4–24 (LVLL…AVLI), 80–100 (PFLL…PIFF), 116–136 (APIG…TVFI), and 138–158 (GYSS…TWFV).

It belongs to the PlsY family. In terms of assembly, probably interacts with PlsX.

It is found in the cell inner membrane. It catalyses the reaction an acyl phosphate + sn-glycerol 3-phosphate = a 1-acyl-sn-glycero-3-phosphate + phosphate. The protein operates within lipid metabolism; phospholipid metabolism. In terms of biological role, catalyzes the transfer of an acyl group from acyl-phosphate (acyl-PO(4)) to glycerol-3-phosphate (G3P) to form lysophosphatidic acid (LPA). This enzyme utilizes acyl-phosphate as fatty acyl donor, but not acyl-CoA or acyl-ACP. This is Glycerol-3-phosphate acyltransferase from Photobacterium profundum (strain SS9).